The primary structure comprises 342 residues: Protein-glutamate methylesterase/protein-glutamine glutaminase 1 (342 aa).

In terms of domain architecture, Response regulatory spans 3–121 (RVLVIDDSLF…NIREIGGELK (119 aa)). D54 carries the post-translational modification 4-aspartylphosphate. The CheB-type methylesterase domain occupies 141–340 (DSNARNVVLI…EKIVETIRAM (200 aa)). Catalysis depends on residues S153, H180, and D282.

The protein belongs to the CheB family. Post-translationally, phosphorylated by CheA. Phosphorylation of the N-terminal regulatory domain activates the methylesterase activity.

Its subcellular location is the cytoplasm. It carries out the reaction [protein]-L-glutamate 5-O-methyl ester + H2O = L-glutamyl-[protein] + methanol + H(+). The enzyme catalyses L-glutaminyl-[protein] + H2O = L-glutamyl-[protein] + NH4(+). Functionally, involved in chemotaxis. Part of a chemotaxis signal transduction system that modulates chemotaxis in response to various stimuli. Catalyzes the demethylation of specific methylglutamate residues introduced into the chemoreceptors (methyl-accepting chemotaxis proteins or MCP) by CheR. Also mediates the irreversible deamidation of specific glutamine residues to glutamic acid. This Methanospirillum hungatei JF-1 (strain ATCC 27890 / DSM 864 / NBRC 100397 / JF-1) protein is Protein-glutamate methylesterase/protein-glutamine glutaminase 1.